Here is a 423-residue protein sequence, read N- to C-terminus: Serine--tRNA ligase (423 aa).

231 to 233 (TGE) provides a ligand contact to L-serine. An ATP-binding site is contributed by 262 to 264 (RQE). Glutamate 285 lines the L-serine pocket. 349–352 (EISS) lines the ATP pocket. Serine 385 is an L-serine binding site.

The protein belongs to the class-II aminoacyl-tRNA synthetase family. Type-1 seryl-tRNA synthetase subfamily. Homodimer. The tRNA molecule binds across the dimer.

The protein resides in the cytoplasm. The catalysed reaction is tRNA(Ser) + L-serine + ATP = L-seryl-tRNA(Ser) + AMP + diphosphate + H(+). The enzyme catalyses tRNA(Sec) + L-serine + ATP = L-seryl-tRNA(Sec) + AMP + diphosphate + H(+). The protein operates within aminoacyl-tRNA biosynthesis; selenocysteinyl-tRNA(Sec) biosynthesis; L-seryl-tRNA(Sec) from L-serine and tRNA(Sec): step 1/1. In terms of biological role, catalyzes the attachment of serine to tRNA(Ser). Is also able to aminoacylate tRNA(Sec) with serine, to form the misacylated tRNA L-seryl-tRNA(Sec), which will be further converted into selenocysteinyl-tRNA(Sec). In Phytoplasma mali (strain AT), this protein is Serine--tRNA ligase.